The chain runs to 521 residues: Beta-glucosidase 11 (521 aa).

The signal sequence occupies residues 1-23 (MKLLSNSLMFLPLLALALTAVSS). A beta-D-glucoside contacts are provided by residues Gln-45, His-144, and 189 to 190 (NE). Glu-190 functions as the Proton donor in the catalytic mechanism. Cys-209 and Cys-217 are disulfide-bonded. Residues Asn-216 and Asn-221 are each glycosylated (N-linked (GlcNAc...) asparagine). A beta-D-glucoside is bound at residue Tyr-356. N-linked (GlcNAc...) asparagine glycosylation is found at Asn-364 and Asn-388. A beta-D-glucoside-binding residues include Glu-422, Trp-466, and Phe-482. Catalysis depends on Glu-422, which acts as the Nucleophile.

The protein belongs to the glycosyl hydrolase 1 family.

The enzyme catalyses Hydrolysis of terminal, non-reducing beta-D-glucosyl residues with release of beta-D-glucose.. The protein is Beta-glucosidase 11 of Arabidopsis thaliana (Mouse-ear cress).